A 379-amino-acid polypeptide reads, in one-letter code: UDP-4-amino-4-deoxy-L-arabinose--oxoglutarate aminotransferase (379 aa).

An N6-(pyridoxal phosphate)lysine modification is found at K182.

Belongs to the DegT/DnrJ/EryC1 family. ArnB subfamily. As to quaternary structure, homodimer. The cofactor is pyridoxal 5'-phosphate.

It catalyses the reaction UDP-4-amino-4-deoxy-beta-L-arabinose + 2-oxoglutarate = UDP-beta-L-threo-pentopyranos-4-ulose + L-glutamate. It functions in the pathway nucleotide-sugar biosynthesis; UDP-4-deoxy-4-formamido-beta-L-arabinose biosynthesis; UDP-4-deoxy-4-formamido-beta-L-arabinose from UDP-alpha-D-glucuronate: step 2/3. It participates in bacterial outer membrane biogenesis; lipopolysaccharide biosynthesis. Functionally, catalyzes the conversion of UDP-4-keto-arabinose (UDP-Ara4O) to UDP-4-amino-4-deoxy-L-arabinose (UDP-L-Ara4N). The modified arabinose is attached to lipid A and is required for resistance to polymyxin and cationic antimicrobial peptides. The protein is UDP-4-amino-4-deoxy-L-arabinose--oxoglutarate aminotransferase of Salmonella schwarzengrund (strain CVM19633).